A 259-amino-acid chain; its full sequence is Probable transcriptional regulatory protein Noca_2383 (259 aa).

Belongs to the TACO1 family.

It localises to the cytoplasm. The chain is Probable transcriptional regulatory protein Noca_2383 from Nocardioides sp. (strain ATCC BAA-499 / JS614).